The following is a 124-amino-acid chain: Small ribosomal subunit protein uS12 (124 aa).

A disordered region spans residues 1–32 (MPTIQQLVRKGREDKVVKTKTPALKGSPQRRG). Position 89 is a 3-methylthioaspartic acid (aspartate 89). The tract at residues 105-124 (QGVKNRKQARSRYGAKKEKS) is disordered. Residues 108–118 (KNRKQARSRYG) show a composition bias toward basic residues.

This sequence belongs to the universal ribosomal protein uS12 family. In terms of assembly, part of the 30S ribosomal subunit. Contacts proteins S8 and S17. May interact with IF1 in the 30S initiation complex.

Its function is as follows. With S4 and S5 plays an important role in translational accuracy. Interacts with and stabilizes bases of the 16S rRNA that are involved in tRNA selection in the A site and with the mRNA backbone. Located at the interface of the 30S and 50S subunits, it traverses the body of the 30S subunit contacting proteins on the other side and probably holding the rRNA structure together. The combined cluster of proteins S8, S12 and S17 appears to hold together the shoulder and platform of the 30S subunit. The protein is Small ribosomal subunit protein uS12 of Kineococcus radiotolerans (strain ATCC BAA-149 / DSM 14245 / SRS30216).